Here is a 392-residue protein sequence, read N- to C-terminus: NADH-quinone oxidoreductase subunit D (392 aa).

Belongs to the complex I 49 kDa subunit family. As to quaternary structure, NDH-1 is composed of 14 different subunits. Subunits NuoB, C, D, E, F, and G constitute the peripheral sector of the complex.

It is found in the cell inner membrane. It carries out the reaction a quinone + NADH + 5 H(+)(in) = a quinol + NAD(+) + 4 H(+)(out). Functionally, NDH-1 shuttles electrons from NADH, via FMN and iron-sulfur (Fe-S) centers, to quinones in the respiratory chain. The immediate electron acceptor for the enzyme in this species is believed to be ubiquinone. Couples the redox reaction to proton translocation (for every two electrons transferred, four hydrogen ions are translocated across the cytoplasmic membrane), and thus conserves the redox energy in a proton gradient. The chain is NADH-quinone oxidoreductase subunit D from Paramagnetospirillum magneticum (strain ATCC 700264 / AMB-1) (Magnetospirillum magneticum).